We begin with the raw amino-acid sequence, 241 residues long: MGQKVNPIGLRLGINRTWDSRWFANKGEYSKLLHEDMRIREVLMKNLKQAAVSKIIIERPHKKCRVTIHSARPGVVIGKKGADIDKIRKLVSKLTDSEVVINIVEVRKPEIDATLVADSIAQQLERRVAFRRAMKRAVQSAIRLGAEGIRINCSGRLGGAEIARLEWYREGRVPLHTLRADVDYGVATAHTAYGTCGIKVWIFKGEILEHDPMAQDRKMAELDHAGGGGGGERRRRERDAA.

One can recognise a KH type-2 domain in the interval 39-107 (IREVLMKNLK…EVVINIVEVR (69 aa)). Positions 219-241 (MAELDHAGGGGGGERRRRERDAA) are disordered. The span at 231-241 (GERRRRERDAA) shows a compositional bias: basic and acidic residues.

Belongs to the universal ribosomal protein uS3 family. In terms of assembly, part of the 30S ribosomal subunit. Forms a tight complex with proteins S10 and S14.

Binds the lower part of the 30S subunit head. Binds mRNA in the 70S ribosome, positioning it for translation. The chain is Small ribosomal subunit protein uS3 from Beijerinckia indica subsp. indica (strain ATCC 9039 / DSM 1715 / NCIMB 8712).